The primary structure comprises 173 residues: Probable lipoprotein EnvE (173 aa).

Residues 1–20 (MTLLSGKTTLVLCLSSILCG) form the signal peptide. Cysteine 21 carries the N-palmitoyl cysteine lipid modification. A lipid anchor (S-diacylglycerol cysteine) is attached at cysteine 21.

It localises to the cell membrane. The sequence is that of Probable lipoprotein EnvE (envE) from Salmonella typhimurium (strain LT2 / SGSC1412 / ATCC 700720).